The primary structure comprises 439 residues: FK506-binding protein 59 (439 aa).

2 PPIase FKBP-type domains span residues 32-120 (GCTV…LGWK) and 149-235 (GAFV…VDCG). TPR repeat units lie at residues 252 to 285 (AKVY…LPTT), 297 to 330 (VATH…DKNN), and 331 to 364 (VKAL…EPGN).

As to quaternary structure, interacts with inaD and trpl, and may be part of the inaD signaling complex. Expression in the embryo is limited to three tissues: lymph glands, Garland cells and oenocyte cells.

The catalysed reaction is [protein]-peptidylproline (omega=180) = [protein]-peptidylproline (omega=0). Functionally, may have a role in phototransduction; inhibits or prevents Ca(2+) induced stimulation of the trpl ion channel. The polypeptide is FK506-binding protein 59 (Drosophila melanogaster (Fruit fly)).